The following is a 388-amino-acid chain: Pepsin A-5 (388 aa).

The N-terminal stretch at 1–15 (MKWLLLLGLVALSEC) is a signal peptide. The propeptide at 16 to 62 (IMYKVPLIRKKSLRRTLSERGLLKDFLKKHNLNPARKYFPQWEAPTL) is activation peptide. Residues 76 to 385 (YFGTIGIGTP…DRANNQVGLA (310 aa)) form the Peptidase A1 domain. Asp-94 is an active-site residue. Cys-107 and Cys-112 are joined by a disulfide. Ser-130 carries the phosphoserine modification. Cysteines 268 and 272 form a disulfide. The active site involves Asp-277. An intrachain disulfide couples Cys-311 to Cys-344.

The protein belongs to the peptidase A1 family.

It is found in the secreted. It catalyses the reaction Preferential cleavage: hydrophobic, preferably aromatic, residues in P1 and P1' positions. Cleaves 1-Phe-|-Val-2, 4-Gln-|-His-5, 13-Glu-|-Ala-14, 14-Ala-|-Leu-15, 15-Leu-|-Tyr-16, 16-Tyr-|-Leu-17, 23-Gly-|-Phe-24, 24-Phe-|-Phe-25 and 25-Phe-|-Tyr-26 bonds in the B chain of insulin.. Functionally, shows particularly broad specificity; although bonds involving phenylalanine and leucine are preferred, many others are also cleaved to some extent. The polypeptide is Pepsin A-5 (PGA5) (Homo sapiens (Human)).